The primary structure comprises 440 residues: 3-phosphoshikimate 1-carboxyvinyltransferase (440 aa).

3-phosphoshikimate-binding residues include Lys19, Ser20, and Arg24. Lys19 contacts phosphoenolpyruvate. Phosphoenolpyruvate contacts are provided by Gly92 and Arg121. 3-phosphoshikimate is bound by residues Ser166, Gln168, Asp315, and Lys342. Gln168 lines the phosphoenolpyruvate pocket. Asp315 acts as the Proton acceptor in catalysis. Residues Arg346 and Arg399 each coordinate phosphoenolpyruvate.

The protein belongs to the EPSP synthase family. Monomer.

It is found in the cytoplasm. The catalysed reaction is 3-phosphoshikimate + phosphoenolpyruvate = 5-O-(1-carboxyvinyl)-3-phosphoshikimate + phosphate. It functions in the pathway metabolic intermediate biosynthesis; chorismate biosynthesis; chorismate from D-erythrose 4-phosphate and phosphoenolpyruvate: step 6/7. Functionally, catalyzes the transfer of the enolpyruvyl moiety of phosphoenolpyruvate (PEP) to the 5-hydroxyl of shikimate-3-phosphate (S3P) to produce enolpyruvyl shikimate-3-phosphate and inorganic phosphate. This is 3-phosphoshikimate 1-carboxyvinyltransferase from Leptospira interrogans serogroup Icterohaemorrhagiae serovar Lai (strain 56601).